The chain runs to 459 residues: Cysteine--tRNA ligase (459 aa).

Cysteine 31 contacts Zn(2+). Positions 33 to 43 (PTVYDNPHIGN) match the 'HIGH' region motif. Zn(2+)-binding residues include cysteine 216, histidine 241, and glutamate 245. The short motif at 274–278 (KMSKS) is the 'KMSKS' region element. Lysine 277 contributes to the ATP binding site.

Belongs to the class-I aminoacyl-tRNA synthetase family. As to quaternary structure, monomer. It depends on Zn(2+) as a cofactor.

Its subcellular location is the cytoplasm. It catalyses the reaction tRNA(Cys) + L-cysteine + ATP = L-cysteinyl-tRNA(Cys) + AMP + diphosphate. The sequence is that of Cysteine--tRNA ligase from Rickettsia felis (strain ATCC VR-1525 / URRWXCal2) (Rickettsia azadi).